The following is a 242-amino-acid chain: UPF0309 protein BH3325 (242 aa).

An SIS domain is found at 34 to 217; the sequence is VSEAVMNGGR…HLLVQQGFEP (184 aa).

This sequence belongs to the UPF0309 family.

This Halalkalibacterium halodurans (strain ATCC BAA-125 / DSM 18197 / FERM 7344 / JCM 9153 / C-125) (Bacillus halodurans) protein is UPF0309 protein BH3325.